Consider the following 130-residue polypeptide: Insulin-like growth factor 1 (130 aa).

The N-terminal stretch at 1–25 (MHAVSSSHLFYLAFCLLVLTSSATA) is a signal peptide. Residues 26-54 (GPETLCGAELVDALQFVCGDRGFYFNKPT) are b. Cystine bridges form between Cys31–Cys73, Cys43–Cys86, and Cys72–Cys77. The tract at residues 55 to 66 (GYGSSSRRAPQT) is c. The a stretch occupies residues 67–87 (GIVDECCFRSCDLRRLEMYCA). Residues 88-95 (PLKPAKSA) form a d region. Positions 96–130 (RSVRAQRHTDMPKTQKEVHLKNASRGSAGNKNYRM) are cleaved as a propeptide — e peptide. The segment at 97 to 130 (SVRAQRHTDMPKTQKEVHLKNASRGSAGNKNYRM) is disordered. The segment covering 102-115 (RHTDMPKTQKEVHL) has biased composition (basic and acidic residues). Positions 119-130 (SRGSAGNKNYRM) are enriched in polar residues.

It belongs to the insulin family. Forms a ternary complex with IGFR1 and ITGAV:ITGB3. Forms a ternary complex with IGFR1 and ITGA6:ITGB4. Forms a ternary complex with IGFBP3 and ALS.

The protein localises to the secreted. In terms of biological role, the insulin-like growth factors, isolated from plasma, are structurally and functionally related to insulin but have a much higher growth-promoting activity. May be a physiological regulator of [1-14C]-2-deoxy-D-glucose (2DG) transport and glycogen synthesis in osteoblasts. Stimulates glucose transport in bone-derived osteoblastic (PyMS) cells and is effective at much lower concentrations than insulin, not only regarding glycogen and DNA synthesis but also with regard to enhancing glucose uptake. May play a role in synapse maturation. Ca(2+)-dependent exocytosis of IGF1 is required for sensory perception of smell in the olfactory bulb. Acts as a ligand for IGF1R. Binds to the alpha subunit of IGF1R, leading to the activation of the intrinsic tyrosine kinase activity which autophosphorylates tyrosine residues in the beta subunit thus initiating a cascade of down-stream signaling events leading to activation of the PI3K-AKT/PKB and the Ras-MAPK pathways. Binds to integrins ITGAV:ITGB3 and ITGA6:ITGB4. Its binding to integrins and subsequent ternary complex formation with integrins and IGFR1 are essential for IGF1 signaling. Induces the phosphorylation and activation of IGFR1, MAPK3/ERK1, MAPK1/ERK2 and AKT1. As part of the MAPK/ERK signaling pathway, acts as a negative regulator of apoptosis in cardiomyocytes via promotion of STUB1/CHIP-mediated ubiquitination and degradation of ICER-type isoforms of CREM. In Cavia porcellus (Guinea pig), this protein is Insulin-like growth factor 1.